Consider the following 246-residue polypeptide: 1-(5-phosphoribosyl)-5-[(5-phosphoribosylamino)methylideneamino] imidazole-4-carboxamide isomerase (246 aa).

The active-site Proton acceptor is aspartate 8. Catalysis depends on aspartate 131, which acts as the Proton donor.

It belongs to the HisA/HisF family.

Its subcellular location is the cytoplasm. It catalyses the reaction 1-(5-phospho-beta-D-ribosyl)-5-[(5-phospho-beta-D-ribosylamino)methylideneamino]imidazole-4-carboxamide = 5-[(5-phospho-1-deoxy-D-ribulos-1-ylimino)methylamino]-1-(5-phospho-beta-D-ribosyl)imidazole-4-carboxamide. It participates in amino-acid biosynthesis; L-histidine biosynthesis; L-histidine from 5-phospho-alpha-D-ribose 1-diphosphate: step 4/9. This Delftia acidovorans (strain DSM 14801 / SPH-1) protein is 1-(5-phosphoribosyl)-5-[(5-phosphoribosylamino)methylideneamino] imidazole-4-carboxamide isomerase.